A 185-amino-acid chain; its full sequence is Nucleoside triphosphate pyrophosphatase (185 aa).

Aspartate 70 serves as the catalytic Proton acceptor.

It belongs to the Maf family. A divalent metal cation serves as cofactor.

Its subcellular location is the cytoplasm. It carries out the reaction a ribonucleoside 5'-triphosphate + H2O = a ribonucleoside 5'-phosphate + diphosphate + H(+). The catalysed reaction is a 2'-deoxyribonucleoside 5'-triphosphate + H2O = a 2'-deoxyribonucleoside 5'-phosphate + diphosphate + H(+). Its function is as follows. Nucleoside triphosphate pyrophosphatase. May have a dual role in cell division arrest and in preventing the incorporation of modified nucleotides into cellular nucleic acids. This chain is Nucleoside triphosphate pyrophosphatase, found in Nitratiruptor sp. (strain SB155-2).